Reading from the N-terminus, the 188-residue chain is Large ribosomal subunit protein eL18 (188 aa).

Belongs to the eukaryotic ribosomal protein eL18 family.

Its subcellular location is the cytoplasm. This is Large ribosomal subunit protein eL18 (RpL18) from Drosophila melanogaster (Fruit fly).